Reading from the N-terminus, the 437-residue chain is 3-phosphoshikimate 1-carboxyvinyltransferase (437 aa).

The 3-phosphoshikimate site is built by K22, S23, and R27. K22 lines the phosphoenolpyruvate pocket. Positions 96 and 125 each coordinate phosphoenolpyruvate. Positions 170, 172, 323, and 350 each coordinate 3-phosphoshikimate. Phosphoenolpyruvate is bound at residue Q172. The Proton acceptor role is filled by D323. Positions 354 and 396 each coordinate phosphoenolpyruvate.

The protein belongs to the EPSP synthase family. In terms of assembly, monomer.

It localises to the cytoplasm. It carries out the reaction 3-phosphoshikimate + phosphoenolpyruvate = 5-O-(1-carboxyvinyl)-3-phosphoshikimate + phosphate. It participates in metabolic intermediate biosynthesis; chorismate biosynthesis; chorismate from D-erythrose 4-phosphate and phosphoenolpyruvate: step 6/7. Functionally, catalyzes the transfer of the enolpyruvyl moiety of phosphoenolpyruvate (PEP) to the 5-hydroxyl of shikimate-3-phosphate (S3P) to produce enolpyruvyl shikimate-3-phosphate and inorganic phosphate. The protein is 3-phosphoshikimate 1-carboxyvinyltransferase of Synechococcus sp. (strain RCC307).